Reading from the N-terminus, the 148-residue chain is Large ribosomal subunit protein uL15 (148 aa).

Over residues 1-40 (MADILQMHDLKPAPGANKDRIRVGRGEGSKGKTSGRGDKG) the composition is skewed to basic and acidic residues. A disordered region spans residues 1-47 (MADILQMHDLKPAPGANKDRIRVGRGEGSKGKTSGRGDKGTKKRYQV).

Belongs to the universal ribosomal protein uL15 family. Part of the 50S ribosomal subunit.

In terms of biological role, binds to the 23S rRNA. This chain is Large ribosomal subunit protein uL15, found in Bifidobacterium adolescentis (strain ATCC 15703 / DSM 20083 / NCTC 11814 / E194a).